The primary structure comprises 619 residues: Chaperone protein HscA homolog (619 aa).

It belongs to the heat shock protein 70 family.

Functionally, chaperone involved in the maturation of iron-sulfur cluster-containing proteins. Has a low intrinsic ATPase activity which is markedly stimulated by HscB. This chain is Chaperone protein HscA homolog, found in Haemophilus influenzae (strain PittEE).